Here is a 213-residue protein sequence, read N- to C-terminus: Ribosomal RNA large subunit methyltransferase E (213 aa).

Residues Gly-68, Trp-70, Asp-88, Asp-104, and Asp-127 each coordinate S-adenosyl-L-methionine. Lys-167 (proton acceptor) is an active-site residue.

The protein belongs to the class I-like SAM-binding methyltransferase superfamily. RNA methyltransferase RlmE family.

The protein localises to the cytoplasm. It carries out the reaction uridine(2552) in 23S rRNA + S-adenosyl-L-methionine = 2'-O-methyluridine(2552) in 23S rRNA + S-adenosyl-L-homocysteine + H(+). Its function is as follows. Specifically methylates the uridine in position 2552 of 23S rRNA at the 2'-O position of the ribose in the fully assembled 50S ribosomal subunit. The polypeptide is Ribosomal RNA large subunit methyltransferase E (Neorickettsia sennetsu (strain ATCC VR-367 / Miyayama) (Ehrlichia sennetsu)).